We begin with the raw amino-acid sequence, 86 residues long: Small ribosomal subunit protein bS20 (86 aa).

This sequence belongs to the bacterial ribosomal protein bS20 family.

Its function is as follows. Binds directly to 16S ribosomal RNA. In Sulfurimonas denitrificans (strain ATCC 33889 / DSM 1251) (Thiomicrospira denitrificans (strain ATCC 33889 / DSM 1251)), this protein is Small ribosomal subunit protein bS20.